The primary structure comprises 462 residues: UDP-N-acetylmuramoylalanine--D-glutamate ligase (462 aa).

109–115 serves as a coordination point for ATP; the sequence is GTDGKST.

The protein belongs to the MurCDEF family.

It is found in the cytoplasm. The catalysed reaction is UDP-N-acetyl-alpha-D-muramoyl-L-alanine + D-glutamate + ATP = UDP-N-acetyl-alpha-D-muramoyl-L-alanyl-D-glutamate + ADP + phosphate + H(+). Its pathway is cell wall biogenesis; peptidoglycan biosynthesis. Functionally, cell wall formation. Catalyzes the addition of glutamate to the nucleotide precursor UDP-N-acetylmuramoyl-L-alanine (UMA). The polypeptide is UDP-N-acetylmuramoylalanine--D-glutamate ligase (Leptospira borgpetersenii serovar Hardjo-bovis (strain JB197)).